Here is a 512-residue protein sequence, read N- to C-terminus: Glutamyl-tRNA(Gln) amidotransferase subunit A (512 aa).

Active-site charge relay system residues include Lys82 and Ser157. Ser181 serves as the catalytic Acyl-ester intermediate.

This sequence belongs to the amidase family. GatA subfamily. Heterotrimer of A, B and C subunits.

The catalysed reaction is L-glutamyl-tRNA(Gln) + L-glutamine + ATP + H2O = L-glutaminyl-tRNA(Gln) + L-glutamate + ADP + phosphate + H(+). Functionally, allows the formation of correctly charged Gln-tRNA(Gln) through the transamidation of misacylated Glu-tRNA(Gln) in organisms which lack glutaminyl-tRNA synthetase. The reaction takes place in the presence of glutamine and ATP through an activated gamma-phospho-Glu-tRNA(Gln). The chain is Glutamyl-tRNA(Gln) amidotransferase subunit A from Bordetella bronchiseptica (strain ATCC BAA-588 / NCTC 13252 / RB50) (Alcaligenes bronchisepticus).